The primary structure comprises 181 residues: MTGNENNLIWIDLEMTGLDPERDRIIEIATLVTDANLNILAEGPVIAVHQSDEQLGLMDDWNVRTHTGSGLVERVKASQYDDHAAELATIAFLQQWVPAGKSPICGNSVGQDRRFLFRYMPELEAYFHYRYLDVSTLKELARRWKPEILSGFKKQGTHQAMDDIRESVGELAYYREHFIQL.

Positions 8–171 (LIWIDLEMTG…DDIRESVGEL (164 aa)) constitute an Exonuclease domain. Tyrosine 129 is a catalytic residue.

Belongs to the oligoribonuclease family.

Its subcellular location is the cytoplasm. 3'-to-5' exoribonuclease specific for small oligoribonucleotides. This chain is Oligoribonuclease, found in Serratia proteamaculans (strain 568).